The chain runs to 310 residues: Vomeronasal type-1 receptor 47 (310 aa).

The Extracellular segment spans residues methionine 1 to threonine 16. A helical transmembrane segment spans residues phenylalanine 17–isoleucine 37. The Cytoplasmic segment spans residues lysine 38–aspartate 49. The helical transmembrane segment at leucine 50–alanine 70 threads the bilayer. The Extracellular portion of the chain corresponds to threonine 71 to leucine 91. Cysteine 85 and cysteine 172 are disulfide-bonded. A helical transmembrane segment spans residues tyrosine 92–leucine 114. The Cytoplasmic portion of the chain corresponds to serine 115–asparagine 131. The helical transmembrane segment at isoleucine 132–isoleucine 152 threads the bilayer. The Extracellular segment spans residues serine 153–glutamate 193. Asparagine 159 is a glycosylation site (N-linked (GlcNAc...) asparagine). The helical transmembrane segment at valine 194 to histidine 214 threads the bilayer. Residues arginine 215–glutamine 238 lie on the Cytoplasmic side of the membrane. The helical transmembrane segment at threonine 239–serine 259 threads the bilayer. Residues serine 260–threonine 269 are Extracellular-facing. Residues cysteine 270–methionine 290 traverse the membrane as a helical segment. The Cytoplasmic portion of the chain corresponds to serine 291–methionine 310.

Belongs to the G-protein coupled receptor 1 family.

Its subcellular location is the cell membrane. Putative pheromone receptor implicated in the regulation of social and reproductive behavior. This Mus musculus (Mouse) protein is Vomeronasal type-1 receptor 47 (Vmn1r47).